We begin with the raw amino-acid sequence, 370 residues long: Probable pectin lyase E (370 aa).

Cysteines 75 and 96 form a disulfide. The active site involves Arg-245. The N-linked (GlcNAc...) asparagine glycan is linked to Asn-307. A disulfide bridge links Cys-311 with Cys-319.

It belongs to the polysaccharide lyase 1 family.

It localises to the secreted. The catalysed reaction is Eliminative cleavage of (1-&gt;4)-alpha-D-galacturonan methyl ester to give oligosaccharides with 4-deoxy-6-O-methyl-alpha-D-galact-4-enuronosyl groups at their non-reducing ends.. Its function is as follows. Pectinolytic enzymes consist of four classes of enzymes: pectin lyase, polygalacturonase, pectin methylesterase and rhamnogalacturonase. Among pectinolytic enzymes, pectin lyase is the most important in depolymerization of pectin, since it cleaves internal glycosidic bonds of highly methylated pectins. The sequence is that of Probable pectin lyase E (pelE) from Aspergillus niger.